The following is a 1035-amino-acid chain: Probable LRR receptor-like serine/threonine-protein kinase At1g53440 (1035 aa).

A signal peptide spans 1-26 (MGFFFSTRKGLLLIIFICLDIFGSNA). The Extracellular portion of the chain corresponds to 27-607 (QLLPEDEVQT…VDTGKPLSNG (581 aa)). Residues asparagine 46, asparagine 75, asparagine 83, and asparagine 110 are each glycosylated (N-linked (GlcNAc...) asparagine). LRR repeat units lie at residues 87 to 110 (VCRVTNIQLRGFNLRGIIPPEFGN), 111 to 135 (LTRLTEIDLVLNFLSGTIPTTLSQI), 137 to 158 (LEILAVTGNRLSGPFPPQLGQI), 160 to 182 (TLTDVIMESNLFTGQLPPNLGNL), 183 to 206 (RSLKRLLISSNNITGRIPESLSNL), 208 to 232 (NLTNFRIDGNSLSGKIPDFIGNWTR), and 234 to 254 (VRLDLQGTSMEGPIPASISNL). N-linked (GlcNAc...) asparagine glycans are attached at residues asparagine 194, asparagine 208, and asparagine 229. 2 N-linked (GlcNAc...) asparagine glycosylation sites follow: asparagine 256 and asparagine 277. LRR repeat units follow at residues 278–302 (MTNMERLVLRNCLIREPIPEYIGTS), 303–326 (MTMLKLLDLSSNMLNGTIPDTFRS), 328–349 (NAFNFMYLNNNSLTGPVPQFIL), and 350–372 (DSKQNIDLSYNNFTQPPTLSCNQ). Residues asparagine 317, asparagine 337, asparagine 361, asparagine 386, asparagine 469, and asparagine 559 are each glycosylated (N-linked (GlcNAc...) asparagine). The helical transmembrane segment at 608–628 (VVAGIVIAACVAFGLLVLVIL) threads the bilayer. Topologically, residues 629-1035 (RLTGYLGGKE…LDDLTDVEIE (407 aa)) are cytoplasmic. Position 656 is a phosphothreonine (threonine 656). The Protein kinase domain occupies 667 to 948 (FDPENKIGEG…QGKIKVQPPL (282 aa)). Residues 673–681 (IGEGGFGPV) and lysine 695 contribute to the ATP site. Tyrosine 740 is subject to Phosphotyrosine. The active-site Proton acceptor is the aspartate 793. A Phosphoserine modification is found at serine 826. Phosphothreonine occurs at positions 827 and 832. A Phosphotyrosine modification is found at tyrosine 840. Residues 969–1035 (LSQDSESQVS…LDDLTDVEIE (67 aa)) form a disordered region. The segment covering 972–981 (DSESQVSTYT) has biased composition (polar residues). A compositionally biased stretch (low complexity) spans 1009–1023 (SLLQQEEGNSSSSSR).

It belongs to the protein kinase superfamily. Ser/Thr protein kinase family.

Its subcellular location is the cell membrane. It catalyses the reaction L-seryl-[protein] + ATP = O-phospho-L-seryl-[protein] + ADP + H(+). It carries out the reaction L-threonyl-[protein] + ATP = O-phospho-L-threonyl-[protein] + ADP + H(+). The chain is Probable LRR receptor-like serine/threonine-protein kinase At1g53440 from Arabidopsis thaliana (Mouse-ear cress).